Reading from the N-terminus, the 81-residue chain is Costars family protein ABRACL (81 aa).

The residue at position 1 (Met1) is an N-acetylmethionine.

This sequence belongs to the costars family.

In Homo sapiens (Human), this protein is Costars family protein ABRACL (ABRACL).